The primary structure comprises 495 residues: Tripartite motif-containing protein 5 (495 aa).

A2 is subject to N-acetylalanine. Residues 15 to 60 form an RING-type zinc finger; sequence CPICLELLTEPLSLPCGHSFCQACITANHKKSMLYKEEERSCPVCR. Phosphoserine is present on S87. The segment at 92–133 adopts a B box-type zinc-finger fold; the sequence is QKVDHCARHGEKLLLFCQEDRKVICWLCERSQEHRGHHTFLM. Zn(2+) contacts are provided by C97, H100, C119, and H125. A coiled-coil region spans residues 137-177; sequence AQEYHVKLQTALEMLRQKQQEAEKLEADIREEKASWKIQID. The required for interaction with GABARAP and for autophagy stretch occupies residues 187–200; the sequence is FEQLREILDWEESN. Positions 283–495 constitute a B30.2/SPRY domain; that stretch reads LKGMLDMFRE…VPMTLCSPSS (213 aa).

It belongs to the TRIM/RBCC family. As to quaternary structure, can form homodimers and homotrimers. In addition to lower-order dimerization, also exhibits a higher-order multimerization and both low- and high-order multimerizations are essential for its restriction activity. Interacts with BTBD1 and BTBD2. Interacts with PSMC4, PSMC5, PSMD7 and HSPA8/HSC70. Interacts (via B30.2/SPRY domain) with HSPA1A/B. Interacts with PSMC2, MAP3K7/TAK1, TAB2 and TAB3. Interacts with SQSTM1. Interacts with TRIM6 and TRIM34. Interacts with ULK1 (phosphorylated form), GABARAP, GABARAPL1, GABARAPL2, MAP1LC3A, MAP1LC3C and BECN1. Post-translationally, degraded in a proteasome-independent fashion in the absence of viral infection but in a proteasome-dependent fashion following exposure to restriction sensitive virus. In terms of processing, autoubiquitinated in a RING finger- and UBE2D2-dependent manner. Monoubiquitinated by TRIM21. Deubiquitinated by Yersinia YopJ. Ubiquitination may not lead to proteasomal degradation.

It localises to the cytoplasm. The protein resides in the nucleus. The enzyme catalyses S-ubiquitinyl-[E2 ubiquitin-conjugating enzyme]-L-cysteine + [acceptor protein]-L-lysine = [E2 ubiquitin-conjugating enzyme]-L-cysteine + N(6)-ubiquitinyl-[acceptor protein]-L-lysine.. Its pathway is protein modification; protein ubiquitination. Capsid-specific restriction factor that prevents infection from non-host-adapted retroviruses. Blocks viral replication early in the life cycle, after viral entry but before reverse transcription. In addition to acting as a capsid-specific restriction factor, also acts as a pattern recognition receptor that activates innate immune signaling in response to the retroviral capsid lattice. Binding to the viral capsid triggers its E3 ubiquitin ligase activity, and in concert with the heterodimeric ubiquitin conjugating enzyme complex UBE2V1-UBE2N (also known as UBC13-UEV1A complex) generates 'Lys-63'-linked polyubiquitin chains, which in turn are catalysts in the autophosphorylation of the MAP3K7/TAK1 complex (includes TAK1, TAB2, and TAB3). Activation of the MAP3K7/TAK1 complex by autophosphorylation results in the induction and expression of NF-kappa-B and MAPK-responsive inflammatory genes, thereby leading to an innate immune response in the infected cell. Plays a role in regulating autophagy through activation of autophagy regulator BECN1 by causing its dissociation from its inhibitors BCL2 and TAB2. This chain is Tripartite motif-containing protein 5 (TRIM5), found in Erythrocebus patas (Red guenon).